A 410-amino-acid chain; its full sequence is TNF receptor-associated factor family protein DDB_G0279745 (410 aa).

An RING-type; degenerate zinc finger spans residues 27-67 (CVICSFPLFDGLQCKRGHGACKSCWEKIIGENGKKECHSCR). 2 consecutive TRAF-type zinc fingers follow at residues 81 to 154 (YLEK…SLEQ) and 154 to 213 (QHQN…DESI). Positions 216 to 284 (LSNSIVEIQK…SMINKLDDSA (69 aa)) form a coiled coil.

It belongs to the TNF receptor-associated factor family.

Its subcellular location is the cytoplasm. Its function is as follows. Probable adapter protein and signal transducer that links members of the tumor necrosis factor receptor family to different signaling pathways by association with the receptor cytoplasmic domain and kinases. The polypeptide is TNF receptor-associated factor family protein DDB_G0279745 (Dictyostelium discoideum (Social amoeba)).